The chain runs to 234 residues: Nuclear transcription factor Y subunit C-1 (234 aa).

2 disordered regions span residues 1–20 (MDTNNQQPPPSAAGIPPPPP) and 205–234 (SVWQTSTGTGDDVSYGSGGSSGQGNLDGQG). Residues 7–20 (QPPPSAAGIPPPPP) are compositionally biased toward pro residues. Residues 209–219 (TSTGTGDDVSY) are compositionally biased toward low complexity. Residues 220-234 (GSGGSSGQGNLDGQG) are compositionally biased toward gly residues.

This sequence belongs to the NFYC/HAP5 subunit family. As to quaternary structure, heterotrimeric transcription factor composed of three components, NF-YA, NF-YB and NF-YC. NF-YB and NF-YC must interact and dimerize for NF-YA association and DNA binding. In terms of tissue distribution, ubiquitous. Present in etiolated seedlings.

It localises to the nucleus. In terms of biological role, stimulates the transcription of various genes by recognizing and binding to a CCAAT motif in promoters. This is Nuclear transcription factor Y subunit C-1 (NFYC1) from Arabidopsis thaliana (Mouse-ear cress).